A 122-amino-acid polypeptide reads, in one-letter code: Basic phospholipase A2 homolog myotoxin II (122 aa).

Intrachain disulfides connect C26-C116, C28-C44, C43-C95, C49-C122, C50-C88, C57-C81, and C75-C86. The segment at K105 to K118 is important for membrane-damaging activities in eukaryotes and bacteria; heparin-binding.

The protein belongs to the phospholipase A2 family. Group II subfamily. K49 sub-subfamily. Homodimer; non-covalently linked (probable alternative/compact dimer conformation). Expressed by the venom gland.

It is found in the secreted. Its activity is regulated as follows. Myotoxic activity is inhibited by suramin and rosmarinic acid. Cytotoxic and myotoxic activities are inhibited by pre-incubation with varespladib. Suramin inhibits this myotoxin by (i) direct blockage of the MDoS and MDiS, preventing the toxin/membrane interaction and disruption and (ii) formation of an oligomeric complex, resulting in a tetrameric configuration for which both MDoS and MDiS becomes physically inaccessible, thus avoiding any possibility of toxin-membrane interaction or disruption. Heparin completely inhibits the cytotoxic and bactericidal activities, but only partially the myotoxic, edema-inducing and lethal effects. Snake venom phospholipase A2 (PLA2) homolog that lacks enzymatic activity. Shows high myotoxin activities. Also shows neurotoxicity, since it induces muscle paralysis when tested on mouse phrenic-diaphragm preparations. Displays edema-inducing activities. Also displays antimicrobial activity against E.coli and C.albicans, as well as antitumoral activity against some human and mice cell lines. In addition, it is effective as parasiticidal agent against Leishmania sp. and S.mansoni. It also disrupts negatively charged liposomes in a dose- and temperature-dependent manner and shows toxicity by intraperitoneal route. In contrast to other phospholipase A2-like toxins, this myotoxin does not require fatty acid binding to be active. The polypeptide is Basic phospholipase A2 homolog myotoxin II (Bothrops moojeni (Lance-headed viper)).